The chain runs to 313 residues: Protein FixB (313 aa).

Residue 255–283 (LYLAVGISGQIQHMVGANASQTIFAINKD) coordinates FAD.

Belongs to the ETF alpha-subunit/FixB family. As to quaternary structure, heterodimer of FixA and FixB.

It participates in amine and polyamine metabolism; carnitine metabolism. Its function is as follows. Required for anaerobic carnitine reduction. May bring reductant to CaiA. In Escherichia coli O139:H28 (strain E24377A / ETEC), this protein is Protein FixB.